The primary structure comprises 193 residues: Adenine phosphoribosyltransferase (193 aa).

It belongs to the purine/pyrimidine phosphoribosyltransferase family. In terms of assembly, homodimer.

It localises to the cytoplasm. The catalysed reaction is AMP + diphosphate = 5-phospho-alpha-D-ribose 1-diphosphate + adenine. Its pathway is purine metabolism; AMP biosynthesis via salvage pathway; AMP from adenine: step 1/1. Its function is as follows. Catalyzes a salvage reaction resulting in the formation of AMP, that is energically less costly than de novo synthesis. This Bifidobacterium animalis subsp. lactis (strain AD011) protein is Adenine phosphoribosyltransferase.